We begin with the raw amino-acid sequence, 312 residues long: Ribosomal protein L11 methyltransferase (312 aa).

Residues T160, G181, D203, and N246 each coordinate S-adenosyl-L-methionine.

It belongs to the methyltransferase superfamily. PrmA family.

Its subcellular location is the cytoplasm. It carries out the reaction L-lysyl-[protein] + 3 S-adenosyl-L-methionine = N(6),N(6),N(6)-trimethyl-L-lysyl-[protein] + 3 S-adenosyl-L-homocysteine + 3 H(+). Functionally, methylates ribosomal protein L11. The chain is Ribosomal protein L11 methyltransferase from Staphylococcus saprophyticus subsp. saprophyticus (strain ATCC 15305 / DSM 20229 / NCIMB 8711 / NCTC 7292 / S-41).